A 555-amino-acid chain; its full sequence is B3 domain-containing protein REM10 (555 aa).

DNA-binding regions (TF-B3) lie at residues 11–103, 150–247, 276–372, and 460–554; these read NPQF…LGPS, CFVA…FPMT, SFVA…LPLN, and SQNR…FCSK.

It localises to the nucleus. In Arabidopsis thaliana (Mouse-ear cress), this protein is B3 domain-containing protein REM10 (REM10).